The following is a 448-amino-acid chain: MEQNMGQAKIYSVSQLNQSVRQMLEGQLGVVWLTGEISNFTQPVSGHWYFSLKDENAQVRCAMFRMKNMRVGFKAQNGMQVLVRASVSLYEPRGDYQLIIESMNLAGDGLLQRQFEALKLTLAAEGLFAQHYKKNLPHFAKSVGIITSPTGAALQDILHILQRRDPSLHVVIYPTAVQGKEATAEIVQMIELANKRREVDVLIVGRGGGSLEDLWCFNEERVARAIFHSELPIISAVGHETDVTIADFVADVRAPTPSAAAELVSRHQQELLDQLFYRKQRLEMALDRFFQQKVKLLQRLQFRLQQQHPQSQLNIQQKMMQQLLHRLHLALSTFVDKKQQKMTALCRRLDNSPLPYYVQKQHQILVQLELRLNSGLQKKFKNADYQLSRLCGKLDSLSPLKVLARGYSITKNQQGQALKNSHQIEVGQLISTQLERGIIVSRVEAMEE.

The protein belongs to the XseA family. Heterooligomer composed of large and small subunits.

It is found in the cytoplasm. The enzyme catalyses Exonucleolytic cleavage in either 5'- to 3'- or 3'- to 5'-direction to yield nucleoside 5'-phosphates.. In terms of biological role, bidirectionally degrades single-stranded DNA into large acid-insoluble oligonucleotides, which are then degraded further into small acid-soluble oligonucleotides. In Histophilus somni (strain 129Pt) (Haemophilus somnus), this protein is Exodeoxyribonuclease 7 large subunit.